Reading from the N-terminus, the 480-residue chain is Krueppel-like factor 10 (480 aa).

Positions 1–12 (MLNFGASLQQAS) are enriched in polar residues. Disordered regions lie at residues 1 to 32 (MLNF…PWDK), 64 to 83 (VTPV…TPDL), and 97 to 146 (PSDF…APPL). A compositionally biased stretch (basic and acidic residues) spans 14–32 (GKMELISEKSKEGAHPWDK). Serine 183 carries the phosphoserine modification. The interval 202–222 (AAVSPNRPKPEPSTAANGAEK) is disordered. Serine 249 carries the post-translational modification Phosphoserine. 3 C2H2-type zinc fingers span residues 369–393 (HICS…VRTH), 399–423 (FSCS…RRTH), and 429–451 (FACP…ARRH).

This sequence belongs to the Sp1 C2H2-type zinc-finger protein family. Post-translationally, ubiquitinated; mediated by SIAH1 and leading to its subsequent proteasomal degradation.

It is found in the nucleus. In terms of biological role, transcriptional repressor which binds to the consensus sequence 5'-GGTGTG-3'. Regulates the circadian expression of genes involved in lipogenesis, gluconeogenesis, and glycolysis in the liver. Represses the expression of PCK2, a rate-limiting step enzyme of gluconeogenesis. May play a role in the cell cycle regulation. Plays a role in the regulation of the circadian clock; binds to the GC box sequence in the promoter of the core clock component ARTNL/BMAL1 and represses its transcriptional activity. This chain is Krueppel-like factor 10 (Klf10), found in Rattus norvegicus (Rat).